Reading from the N-terminus, the 666-residue chain is Calpain-10 (666 aa).

Residues 13-321 (LFRDAAFPAS…FDEVTIGYPV (309 aa)) form the Calpain catalytic domain. Active-site residues include Cys-73, His-238, and Asn-263. 2 domain III regions span residues 322-488 (TEAG…ISLS) and 507-648 (EWET…IHSQ).

This sequence belongs to the peptidase C2 family.

In terms of biological role, calcium-regulated non-lysosomal thiol-protease which catalyzes limited proteolysis of substrates involved in cytoskeletal remodeling and signal transduction. May play a role in insulin-stimulated glucose uptake. The sequence is that of Calpain-10 (Capn10) from Mus musculus (Mouse).